The primary structure comprises 1692 residues: Flagellar attachment zone protein 1 (1692 aa).

Coiled-coil stretches lie at residues 613–657, 684–864, and 903–1607; these read REQE…KLQK, VTLD…HKVR, and NDHM…SALE. 37 tandem repeats follow at residues 1012–1025, 1026–1039, 1040–1053, 1054–1067, 1068–1081, 1082–1095, 1096–1109, 1110–1123, 1124–1137, 1138–1151, 1152–1165, 1166–1179, 1180–1193, 1194–1207, 1208–1221, 1222–1235, 1236–1249, 1250–1263, 1264–1277, 1278–1291, 1292–1305, 1306–1319, 1320–1333, 1334–1347, 1348–1361, 1362–1375, 1376–1389, 1390–1403, 1404–1417, 1418–1431, 1432–1445, 1446–1459, 1460–1473, 1474–1487, 1488–1501, 1502–1515, and 1516–1529. Residues 1012 to 1529 are 37 X 14 AA tandem repeats of E-E-L-E-L-K-[VA]-A-E-N-E-K-L-A; it reads EELELKAAEN…LKVAENKRLA (518 aa).

It is found in the cell projection. It localises to the cilium. Its subcellular location is the flagellum. Its function is as follows. A component of FAZ filament that is required for correct FAZ assembly and attachment. Not essential for new flagellum growth. The chain is Flagellar attachment zone protein 1 from Trypanosoma brucei brucei (strain 927/4 GUTat10.1).